The following is a 170-amino-acid chain: Protein SprT (170 aa).

Residues 23–165 form the SprT-like domain; the sequence is QLANQHLGTD…RECGEKLQFV (143 aa). Zn(2+) is bound at residue H78. The active site involves E79. Position 82 (H82) interacts with Zn(2+).

Belongs to the SprT family. Zn(2+) serves as cofactor.

The protein resides in the cytoplasm. This is Protein SprT from Yersinia enterocolitica serotype O:8 / biotype 1B (strain NCTC 13174 / 8081).